Reading from the N-terminus, the 108-residue chain is UPF0060 membrane protein RER_49640 (108 aa).

Transmembrane regions (helical) follow at residues 8 to 28 (LLFV…WQGI), 33 to 53 (GWIW…VATM), 62 to 82 (ILAA…VVMD), and 87 to 107 (DRFD…IMYA).

Belongs to the UPF0060 family.

The protein resides in the cell membrane. This is UPF0060 membrane protein RER_49640 from Rhodococcus erythropolis (strain PR4 / NBRC 100887).